We begin with the raw amino-acid sequence, 83 residues long: Envelope small membrane protein (83 aa).

Topologically, residues 1 to 16 (MFNLFLTDTVWYVGQI) are virion surface. The chain crosses the membrane as a helical span at residues 17–37 (IFIFAVCLMVTIIVVAFLASI). Topologically, residues 38-79 (KLCIQLCGLCNTLVLSPSIYLYDRSKQLYKYYNEEMRLPLLE) are intravirion.

Belongs to the betacoronaviruses E protein family. Homopentamer. Interacts with membrane protein M in the budding compartment of the host cell, which is located between endoplasmic reticulum and the Golgi complex. Interacts with Nucleoprotein.

It is found in the host Golgi apparatus membrane. Component of the viral envelope that plays a central role in virus morphogenesis and assembly. It is sufficient to form virus-like particles. Seems to be important for creating the membrane curvature needed to acquire the rounded, stable and infectious particle phenotype. Acts as a viroporin, inducing the formation of hydrophilic pores in cellular membranes. Also induces apoptosis. In terms of biological role, plays a central role in virus morphogenesis and assembly. Acts as a viroporin and self-assembles in host membranes forming pentameric protein-lipid pores that allow ion transport. Also plays a role in the induction of apoptosis. The chain is Envelope small membrane protein from Mus musculus (Mouse).